The primary structure comprises 222 residues: Protein GrpE (222 aa).

Positions 1–21 (MSDEKNKFTDASFENCDLKNP) are disordered.

Belongs to the GrpE family. Homodimer.

Its subcellular location is the cytoplasm. Its function is as follows. Participates actively in the response to hyperosmotic and heat shock by preventing the aggregation of stress-denatured proteins, in association with DnaK and GrpE. It is the nucleotide exchange factor for DnaK and may function as a thermosensor. Unfolded proteins bind initially to DnaJ; upon interaction with the DnaJ-bound protein, DnaK hydrolyzes its bound ATP, resulting in the formation of a stable complex. GrpE releases ADP from DnaK; ATP binding to DnaK triggers the release of the substrate protein, thus completing the reaction cycle. Several rounds of ATP-dependent interactions between DnaJ, DnaK and GrpE are required for fully efficient folding. The chain is Protein GrpE from Bartonella tribocorum (strain CIP 105476 / IBS 506).